A 90-amino-acid polypeptide reads, in one-letter code: uncharacterized protein (90 aa).

The protein to E.coli RlpA.

This is an uncharacterized protein from Synechocystis sp. (strain ATCC 27184 / PCC 6803 / Kazusa).